The primary structure comprises 98 residues: Ubiquitin-related modifier 1 (98 aa).

Gly98 carries the 1-thioglycine modification. Residue Gly98 forms a Glycyl lysine isopeptide (Gly-Lys) (interchain with K-? in acceptor proteins) linkage.

Belongs to the URM1 family. Post-translationally, C-terminal thiocarboxylation occurs in 2 steps, it is first acyl-adenylated (-COAMP) via the hesA/moeB/thiF part of UBA4, then thiocarboxylated (-COSH) via the rhodanese domain of UBA4.

The protein resides in the cytoplasm. Its pathway is tRNA modification; 5-methoxycarbonylmethyl-2-thiouridine-tRNA biosynthesis. In terms of biological role, acts as a sulfur carrier required for 2-thiolation of mcm(5)S(2)U at tRNA wobble positions of cytosolic tRNA(Lys), tRNA(Glu) and tRNA(Gln). Serves as sulfur donor in tRNA 2-thiolation reaction by being thiocarboxylated (-COSH) at its C-terminus by the MOCS3 homolog UBA4. The sulfur is then transferred to tRNA to form 2-thiolation of mcm(5)S(2)U. Prior mcm(5) tRNA modification by the elongator complex is required for 2-thiolation. Also acts as a ubiquitin-like protein (UBL) that is covalently conjugated via an isopeptide bond to lysine residues of target proteins such as AHP1. The thiocarboxylated form serves as substrate for conjugation and oxidative stress specifically induces the formation of UBL-protein conjugates. This is Ubiquitin-related modifier 1 from Candida glabrata (strain ATCC 2001 / BCRC 20586 / JCM 3761 / NBRC 0622 / NRRL Y-65 / CBS 138) (Yeast).